Here is a 481-residue protein sequence, read N- to C-terminus: Glutamate--tRNA ligase (481 aa).

Positions 11-21 match the 'HIGH' region motif; sequence PSPTGLLHIGN. A 'KMSKS' region motif is present at residues 255–259; that stretch reads KLSKR. Lys258 provides a ligand contact to ATP.

It belongs to the class-I aminoacyl-tRNA synthetase family. Glutamate--tRNA ligase type 1 subfamily. In terms of assembly, monomer.

It is found in the cytoplasm. It catalyses the reaction tRNA(Glu) + L-glutamate + ATP = L-glutamyl-tRNA(Glu) + AMP + diphosphate. Catalyzes the attachment of glutamate to tRNA(Glu) in a two-step reaction: glutamate is first activated by ATP to form Glu-AMP and then transferred to the acceptor end of tRNA(Glu). The sequence is that of Glutamate--tRNA ligase from Streptococcus pyogenes serotype M3 (strain ATCC BAA-595 / MGAS315).